The chain runs to 342 residues: Voltage-gated hydrogen channel 1 (342 aa).

Disordered regions lie at residues 1–20 and 74–102; these read MEGD…INPN and FNDN…SEQK. The Cytoplasmic segment spans residues 1–148; that stretch reads MEGDNCNKSR…KLRHILHSKP (148 aa). Residues 86–102 are compositionally biased toward polar residues; the sequence is QEQSTQNTMISMQSEQK. Residues 149–169 traverse the membrane as a helical segment; sequence IHVAIIVLVVLDSFLVVGELL. The Extracellular portion of the chain corresponds to 170–185; the sequence is IDLKVIIVPHGNPAPE. Residues 186–208 traverse the membrane as a helical segment; it reads ILHGFSLSILSIFMVEIALKIIA. The Cytoplasmic segment spans residues 209–217; that stretch reads DHRHFIHHK. The chain crosses the membrane as a helical span at residues 218 to 238; the sequence is VEVLDAVVVVISFGVDIALIF. The Extracellular segment spans residues 239–247; sequence VGESEALAA. A helical transmembrane segment spans residues 248-268; that stretch reads IGLLVILRLWRVFRIINGIIV. Residues 269 to 342 lie on the Cytoplasmic side of the membrane; that stretch reads TVKTKADDRV…HSTTTASADV (74 aa). Residues 271 to 315 adopt a coiled-coil conformation; the sequence is KTKADDRVHEIKKKNSELELQIHNLEEKLSQKEQDMSRLHEILRC.

Belongs to the hydrogen channel family. As to quaternary structure, homodimer.

Its subcellular location is the membrane. The protein localises to the cell membrane. With respect to regulation, less sensitive to zinc ions as compared to the mammalian homologs. Its function is as follows. Mediates the voltage-dependent proton permeability of excitable membranes. Forms a proton-selective channel through which protons may pass in accordance with their electrochemical gradient. The sequence is that of Voltage-gated hydrogen channel 1 (HVCN1) from Ciona intestinalis (Transparent sea squirt).